Consider the following 308-residue polypeptide: Putative S-adenosyl-L-methionine-dependent methyltransferase MAB_4584c (308 aa).

Residues D131 and D160–L161 contribute to the S-adenosyl-L-methionine site.

The protein belongs to the UPF0677 family.

Exhibits S-adenosyl-L-methionine-dependent methyltransferase activity. The protein is Putative S-adenosyl-L-methionine-dependent methyltransferase MAB_4584c of Mycobacteroides abscessus (strain ATCC 19977 / DSM 44196 / CCUG 20993 / CIP 104536 / JCM 13569 / NCTC 13031 / TMC 1543 / L948) (Mycobacterium abscessus).